Consider the following 205-residue polypeptide: MIGKLKGTIDEIGEDHVVLDVHGVGYVAHCSARTLAKLGRAGEAAVLFIETYVREDQLKLFGFLSALEREWFRLLQSVQGVGSKVALAVLSTLTPGELANAIALQDKTSISRAPGVGPKVAVRIVTELKNKAPAFVGEMAPSIGLKQELGEGVAAAPVSDAVSALTNLGYSRDQAANAVAAALKNGGEGADSARLIRLGLKELSR.

The domain I stretch occupies residues 1-64 (MIGKLKGTID…EDQLKLFGFL (64 aa)). Positions 65-143 (SALEREWFRL…AFVGEMAPSI (79 aa)) are domain II. Positions 144 to 153 (GLKQELGEGV) are flexible linker. Positions 153-205 (VAAAPVSDAVSALTNLGYSRDQAANAVAAALKNGGEGADSARLIRLGLKELSR) are domain III.

This sequence belongs to the RuvA family. As to quaternary structure, homotetramer. Forms an RuvA(8)-RuvB(12)-Holliday junction (HJ) complex. HJ DNA is sandwiched between 2 RuvA tetramers; dsDNA enters through RuvA and exits via RuvB. An RuvB hexamer assembles on each DNA strand where it exits the tetramer. Each RuvB hexamer is contacted by two RuvA subunits (via domain III) on 2 adjacent RuvB subunits; this complex drives branch migration. In the full resolvosome a probable DNA-RuvA(4)-RuvB(12)-RuvC(2) complex forms which resolves the HJ.

The protein resides in the cytoplasm. Its function is as follows. The RuvA-RuvB-RuvC complex processes Holliday junction (HJ) DNA during genetic recombination and DNA repair, while the RuvA-RuvB complex plays an important role in the rescue of blocked DNA replication forks via replication fork reversal (RFR). RuvA specifically binds to HJ cruciform DNA, conferring on it an open structure. The RuvB hexamer acts as an ATP-dependent pump, pulling dsDNA into and through the RuvAB complex. HJ branch migration allows RuvC to scan DNA until it finds its consensus sequence, where it cleaves and resolves the cruciform DNA. The polypeptide is Holliday junction branch migration complex subunit RuvA (Sinorhizobium medicae (strain WSM419) (Ensifer medicae)).